A 231-amino-acid polypeptide reads, in one-letter code: Ribose-5-phosphate isomerase A (231 aa).

Residues 32–35, 85–88, and 98–101 each bind substrate; these read TGST, DGAD, and KGGG. E107 functions as the Proton acceptor in the catalytic mechanism. Residue K125 participates in substrate binding.

It belongs to the ribose 5-phosphate isomerase family. Homodimer.

The enzyme catalyses aldehydo-D-ribose 5-phosphate = D-ribulose 5-phosphate. Its pathway is carbohydrate degradation; pentose phosphate pathway; D-ribose 5-phosphate from D-ribulose 5-phosphate (non-oxidative stage): step 1/1. Catalyzes the reversible conversion of ribose-5-phosphate to ribulose 5-phosphate. In Burkholderia mallei (strain NCTC 10247), this protein is Ribose-5-phosphate isomerase A.